Consider the following 152-residue polypeptide: Ribosome maturation factor RimP (152 aa).

This sequence belongs to the RimP family.

Its subcellular location is the cytoplasm. Functionally, required for maturation of 30S ribosomal subunits. In Burkholderia multivorans (strain ATCC 17616 / 249), this protein is Ribosome maturation factor RimP.